The primary structure comprises 370 residues: Glutathione S-transferase omega-like 2 (370 aa).

Residue Arg-15 participates in glutathione binding. The active-site Nucleophile is Cys-46. Glutathione is bound by residues Trp-79, Arg-155, Val-158, Glu-173, and Ser-174. The region spanning 201-353 (PAQLKTQIDD…LHYTRSHTRI (153 aa)) is the GST C-terminal domain.

Belongs to the GST superfamily. Omega family. In terms of assembly, homodimer.

Its subcellular location is the cytoplasm. It catalyses the reaction RX + glutathione = an S-substituted glutathione + a halide anion + H(+). It carries out the reaction L-dehydroascorbate + 2 glutathione = glutathione disulfide + L-ascorbate. Its function is as follows. Active as '1-Cys' thiol transferase against beta-hydroxyethyl disulfide (HED), as dehydroascorbate reductase and as dimethylarsinic acid reductase, while not active against the standard GST substrate 1-chloro-2,4-dinitrobenzene (CDNB). May be involved in cell wall organization and biogenesis. The protein is Glutathione S-transferase omega-like 2 of Saccharomyces cerevisiae (strain ATCC 204508 / S288c) (Baker's yeast).